The sequence spans 299 residues: Aspartate carbamoyltransferase catalytic subunit (299 aa).

Positions 51 and 52 each coordinate carbamoyl phosphate. Lys-79 is an L-aspartate binding site. The carbamoyl phosphate site is built by Arg-101, His-130, and Gln-133. 2 residues coordinate L-aspartate: Arg-163 and Arg-215. Gly-256 and Pro-257 together coordinate carbamoyl phosphate.

It belongs to the aspartate/ornithine carbamoyltransferase superfamily. ATCase family. In terms of assembly, heterododecamer (2C3:3R2) of six catalytic PyrB chains organized as two trimers (C3), and six regulatory PyrI chains organized as three dimers (R2).

It carries out the reaction carbamoyl phosphate + L-aspartate = N-carbamoyl-L-aspartate + phosphate + H(+). The protein operates within pyrimidine metabolism; UMP biosynthesis via de novo pathway; (S)-dihydroorotate from bicarbonate: step 2/3. Its function is as follows. Catalyzes the condensation of carbamoyl phosphate and aspartate to form carbamoyl aspartate and inorganic phosphate, the committed step in the de novo pyrimidine nucleotide biosynthesis pathway. This is Aspartate carbamoyltransferase catalytic subunit from Ehrlichia chaffeensis (strain ATCC CRL-10679 / Arkansas).